Here is a 272-residue protein sequence, read N- to C-terminus: Pyrroline-5-carboxylate reductase (272 aa).

The protein belongs to the pyrroline-5-carboxylate reductase family.

It localises to the cytoplasm. It carries out the reaction L-proline + NADP(+) = (S)-1-pyrroline-5-carboxylate + NADPH + 2 H(+). The enzyme catalyses L-proline + NAD(+) = (S)-1-pyrroline-5-carboxylate + NADH + 2 H(+). It functions in the pathway amino-acid biosynthesis; L-proline biosynthesis; L-proline from L-glutamate 5-semialdehyde: step 1/1. Catalyzes the reduction of 1-pyrroline-5-carboxylate (PCA) to L-proline. The polypeptide is Pyrroline-5-carboxylate reductase (Vibrio alginolyticus).